Here is an 885-residue protein sequence, read N- to C-terminus: DNA-directed RNA polymerase subunit Rpo1N (885 aa).

Positions 60, 63, 70, 73, 100, 103, 150, and 153 each coordinate Zn(2+). Residues aspartate 464, aspartate 466, and aspartate 468 each coordinate Mg(2+).

This sequence belongs to the RNA polymerase beta' chain family. Part of the RNA polymerase complex. Mg(2+) serves as cofactor. Requires Zn(2+) as cofactor.

It is found in the cytoplasm. It carries out the reaction RNA(n) + a ribonucleoside 5'-triphosphate = RNA(n+1) + diphosphate. Its function is as follows. DNA-dependent RNA polymerase (RNAP) catalyzes the transcription of DNA into RNA using the four ribonucleoside triphosphates as substrates. Forms the clamp head domain. The polypeptide is DNA-directed RNA polymerase subunit Rpo1N (Thermoplasma acidophilum (strain ATCC 25905 / DSM 1728 / JCM 9062 / NBRC 15155 / AMRC-C165)).